A 153-amino-acid chain; its full sequence is MRCPFCGYEDSKVVDTRPTNEGKTIKRRRECLKCQKRFTTYEKIEKQPILVIKKDNRREEFDRNKILNGIIKACQKRPVSIEQMNKIVDEIENEIYNSMREEISSREIGEMVMEKLKKIDEISYVRFASVYRQFKDINTFIEELQKLLTEKIE.

A zinc finger lies at 3-34; the sequence is CPFCGYEDSKVVDTRPTNEGKTIKRRRECLKC. The ATP-cone domain maps to 49-139; sequence ILVIKKDNRR…VYRQFKDINT (91 aa).

The protein belongs to the NrdR family. Zn(2+) serves as cofactor.

In terms of biological role, negatively regulates transcription of bacterial ribonucleotide reductase nrd genes and operons by binding to NrdR-boxes. The chain is Transcriptional repressor NrdR from Caldicellulosiruptor bescii (strain ATCC BAA-1888 / DSM 6725 / KCTC 15123 / Z-1320) (Anaerocellum thermophilum).